The chain runs to 314 residues: Porphobilinogen deaminase (314 aa).

An S-(dipyrrolylmethanemethyl)cysteine modification is found at cysteine 249.

It belongs to the HMBS family. In terms of assembly, monomer. It depends on dipyrromethane as a cofactor.

The catalysed reaction is 4 porphobilinogen + H2O = hydroxymethylbilane + 4 NH4(+). It functions in the pathway porphyrin-containing compound metabolism; protoporphyrin-IX biosynthesis; coproporphyrinogen-III from 5-aminolevulinate: step 2/4. Its function is as follows. Tetrapolymerization of the monopyrrole PBG into the hydroxymethylbilane pre-uroporphyrinogen in several discrete steps. The polypeptide is Porphobilinogen deaminase (Brucella abortus (strain S19)).